The chain runs to 113 residues: Hydrogenase maturation factor HypA (113 aa).

His2 lines the Ni(2+) pocket. Residues Cys73, Cys76, Cys89, and Cys92 each contribute to the Zn(2+) site.

It belongs to the HypA/HybF family.

In terms of biological role, involved in the maturation of [NiFe] hydrogenases. Required for nickel insertion into the metal center of the hydrogenase. This chain is Hydrogenase maturation factor HypA, found in Rhodopseudomonas palustris (strain BisA53).